Reading from the N-terminus, the 237-residue chain is KH homology domain-containing protein 1 (237 aa).

2 helical membrane-spanning segments follow: residues 7–29 (RLFRVLFVIETVSEYGVLIFIYG) and 33–50 (LQTLAMLLIGTVSFHLWI). Residues 96–155 (PMVFHMEEDQEELIFGHGDTYLRCIEVHSHTLIQLESWFTATGQTRVTVVGPHRARQWLL) enclose the KH; atypical domain.

This sequence belongs to the KHDC1 family.

Its subcellular location is the membrane. The sequence is that of KH homology domain-containing protein 1 from Homo sapiens (Human).